The chain runs to 288 residues: NAD kinase (288 aa).

The active-site Proton acceptor is aspartate 68. NAD(+) is bound by residues 68 to 69 (DG), 142 to 143 (ND), arginine 153, aspartate 172, and glutamine 242.

Belongs to the NAD kinase family. A divalent metal cation is required as a cofactor.

The protein localises to the cytoplasm. It catalyses the reaction NAD(+) + ATP = ADP + NADP(+) + H(+). Its function is as follows. Involved in the regulation of the intracellular balance of NAD and NADP, and is a key enzyme in the biosynthesis of NADP. Catalyzes specifically the phosphorylation on 2'-hydroxyl of the adenosine moiety of NAD to yield NADP. This chain is NAD kinase, found in Desulforamulus reducens (strain ATCC BAA-1160 / DSM 100696 / MI-1) (Desulfotomaculum reducens).